We begin with the raw amino-acid sequence, 254 residues long: Imidazole glycerol phosphate synthase subunit HisF (254 aa).

Residues Asp-13 and Asp-132 contribute to the active site.

Belongs to the HisA/HisF family. As to quaternary structure, heterodimer of HisH and HisF.

The protein resides in the cytoplasm. It catalyses the reaction 5-[(5-phospho-1-deoxy-D-ribulos-1-ylimino)methylamino]-1-(5-phospho-beta-D-ribosyl)imidazole-4-carboxamide + L-glutamine = D-erythro-1-(imidazol-4-yl)glycerol 3-phosphate + 5-amino-1-(5-phospho-beta-D-ribosyl)imidazole-4-carboxamide + L-glutamate + H(+). The protein operates within amino-acid biosynthesis; L-histidine biosynthesis; L-histidine from 5-phospho-alpha-D-ribose 1-diphosphate: step 5/9. IGPS catalyzes the conversion of PRFAR and glutamine to IGP, AICAR and glutamate. The HisF subunit catalyzes the cyclization activity that produces IGP and AICAR from PRFAR using the ammonia provided by the HisH subunit. The sequence is that of Imidazole glycerol phosphate synthase subunit HisF from Nautilia profundicola (strain ATCC BAA-1463 / DSM 18972 / AmH).